The following is a 127-amino-acid chain: UPF0325 protein ASA_3165 (127 aa).

The protein belongs to the UPF0325 family.

This is UPF0325 protein ASA_3165 from Aeromonas salmonicida (strain A449).